A 453-amino-acid polypeptide reads, in one-letter code: Bifunctional protein GlmU (453 aa).

The segment at 1 to 226 (MFAIAILAAG…IDEVSGVNDR (226 aa)) is pyrophosphorylase. UDP-N-acetyl-alpha-D-glucosamine is bound by residues 7–10 (LAAG), K21, Q73, and 78–79 (GT). D103 serves as a coordination point for Mg(2+). Residues G140, E155, N170, and N224 each contribute to the UDP-N-acetyl-alpha-D-glucosamine site. N224 lines the Mg(2+) pocket. A linker region spans residues 227–247 (AQLANCENLIQQSLRNHWMSK). Residues 248-453 (GVSFIDPESC…NWKTREETNQ (206 aa)) form an N-acetyltransferase region. Residues R329 and K347 each coordinate UDP-N-acetyl-alpha-D-glucosamine. The active-site Proton acceptor is H359. UDP-N-acetyl-alpha-D-glucosamine is bound by residues Y362 and N373. Acetyl-CoA contacts are provided by A376, A419, and R436.

The protein in the N-terminal section; belongs to the N-acetylglucosamine-1-phosphate uridyltransferase family. In the C-terminal section; belongs to the transferase hexapeptide repeat family. Homotrimer. It depends on Mg(2+) as a cofactor.

The protein resides in the cytoplasm. It catalyses the reaction alpha-D-glucosamine 1-phosphate + acetyl-CoA = N-acetyl-alpha-D-glucosamine 1-phosphate + CoA + H(+). It carries out the reaction N-acetyl-alpha-D-glucosamine 1-phosphate + UTP + H(+) = UDP-N-acetyl-alpha-D-glucosamine + diphosphate. Its pathway is nucleotide-sugar biosynthesis; UDP-N-acetyl-alpha-D-glucosamine biosynthesis; N-acetyl-alpha-D-glucosamine 1-phosphate from alpha-D-glucosamine 6-phosphate (route II): step 2/2. The protein operates within nucleotide-sugar biosynthesis; UDP-N-acetyl-alpha-D-glucosamine biosynthesis; UDP-N-acetyl-alpha-D-glucosamine from N-acetyl-alpha-D-glucosamine 1-phosphate: step 1/1. It functions in the pathway bacterial outer membrane biogenesis; LPS lipid A biosynthesis. Its function is as follows. Catalyzes the last two sequential reactions in the de novo biosynthetic pathway for UDP-N-acetylglucosamine (UDP-GlcNAc). The C-terminal domain catalyzes the transfer of acetyl group from acetyl coenzyme A to glucosamine-1-phosphate (GlcN-1-P) to produce N-acetylglucosamine-1-phosphate (GlcNAc-1-P), which is converted into UDP-GlcNAc by the transfer of uridine 5-monophosphate (from uridine 5-triphosphate), a reaction catalyzed by the N-terminal domain. In Prochlorococcus marinus (strain MIT 9211), this protein is Bifunctional protein GlmU.